A 582-amino-acid chain; its full sequence is PX domain-containing protein kinase-like protein (582 aa).

Residues 14-126 (LDDTVPLTAA…KFLDPNNYSA (113 aa)) enclose the PX domain. The Protein kinase domain maps to 88-481 (FIAERQRGLQ…VENSEEQPVK (394 aa)). Residues 433–550 (EQKQIHQHRR…APFLPQPVNG (118 aa)) form a disordered region. 2 stretches are compositionally biased toward basic residues: residues 437–448 (IHQHRRLTRAQS) and 457–469 (KRRK…KSKR). A compositionally biased stretch (low complexity) spans 483–514 (SNSNNSAGSGASSPLTSPSSPTPPSTAGLSSA). Pro residues predominate over residues 515-531 (LPPPPPPPPPPPPPAGP). The WH2 domain maps to 548–567 (VNGVNRGALLSSIQNFQKGT).

This sequence belongs to the protein kinase superfamily. In terms of tissue distribution, isoform 1 is present in all tissues examined. Isoform 2 is found in all tissues except skeletal muscle and very low levels in spleen. Both isoforms are widely expressed throughout the nervous system however levels of isoform 2 are higher in purified hippocampal and cortical neurons whereas glial cells express more isoform 1 than isoform 2.

The protein localises to the cytoplasm. The protein resides in the cell membrane. Binds to and modulates brain Na,K-ATPase subunits ATP1B1 and ATP1B3 and may thereby participate in the regulation of electrical excitability and synaptic transmission. May not display kinase activity. The polypeptide is PX domain-containing protein kinase-like protein (Mus musculus (Mouse)).